Here is a 71-residue protein sequence, read N- to C-terminus: Gas vesicle protein A (71 aa).

Residues 12-22 (LAEVIDRILDK) are alpha helix 1. The segment at 26–34 (VDAWVRVSL) is beta-strand 1. Positions 35–37 (VGI) are beta turn. Residues 38-46 (ELLAIEARI) are beta-strand 2. Residues 51 to 70 (VETYLKYAEAVGLTQSAAVP) are alpha helix 2.

This sequence belongs to the gas vesicle GvpA family. As to quaternary structure, the gas vesicle shell is 2 nm thick and consists of a single layer of this protein. It forms helical ribs nearly perpendicular to the long axis of the vesicle.

The protein localises to the gas vesicle shell. Gas vesicles are hollow, gas filled proteinaceous nanostructures found in some microorganisms. During planktonic growth they allow positioning of the organism at a favorable depth for light or nutrient acquisition. GvpA forms the protein shell. This Microchaete diplosiphon (Fremyella diplosiphon) protein is Gas vesicle protein A.